The chain runs to 248 residues: 14-3-3 protein zeta (248 aa).

Belongs to the 14-3-3 family. Homodimer; homodimerization is not essential for modulating the activity of Slo. Interacts with phosphorylated Slob; the interaction with Slob mediates an indirect interaction with Slo. Interacts with phosphorylated yki. Interacts with hemo; this represses 14-3-3zeta activity which prevents the 14-3-3zeta-mediated activation of phosphoinositide 3-kinase Pi3K68D. This, in turn, inhibits the Pi3K68D-mediated conversion of phosphatidylinositol to phosphatidylinositol-3-phosphate and prevents progression of early endosomes through the maturation process which regulates subsequent steps of phagocytic processing. Interacts with REPTOR (when phosphorylated), this interaction may assist the cytoplasmic retention of REPTOR. In terms of tissue distribution, predominantly expressed in the ventral nerve cord of the embryo, and in the neural tissues of the head. Also found in the region posterior to the morphogenetic furrow of the eye imaginal disk where cells differentiate as photoreceptors.

It localises to the cytoplasm. Its subcellular location is the early endosome. Functionally, required in Raf-dependent cell proliferation and photoreceptor differentiation during eye development. Acts upstream of Raf and downstream of Ras, and is essential for viability. Acts as a negative regulator of the slo calcium channel via its interaction with slo-binding protein slob. Inhibits yki activity by restricting its nuclear localization. Binds to and promotes the activity of phosphoinositide 3-kinase Pi3K68D which converts phosphatidylinositol to phosphatidylinositol-3-phosphate and promotes maturation of early endosomes. This is 14-3-3 protein zeta (14-3-3zeta) from Drosophila melanogaster (Fruit fly).